The following is a 504-amino-acid chain: Sodium-coupled neutral amino acid symporter 2 (504 aa).

Positions 1 to 23 are disordered; the sequence is MKKTEMGRFNISPDEDSSSYSSN. Residues 1 to 76 lie on the Cytoplasmic side of the membrane; that stretch reads MKKTEMGRFN…HPGTTSFGMS (76 aa). Residues 1-96 form a regulates protein turnover upon amino acid deprivation region; it reads MKKTEMGRFN…SGILGLSYAM (96 aa). Residues Ser12, Ser21, Ser22, and Ser55 each carry the phosphoserine modification. A helical membrane pass occupies residues 77–96; that stretch reads VFNLSNAIVGSGILGLSYAM. Residue Asn82 coordinates Na(+). The Extracellular portion of the chain corresponds to 97–102; the sequence is ANTGIA. Residues 103-123 traverse the membrane as a helical segment; sequence LFIILLTFVSIFSLYSVHLLL. Over 124-158 the chain is Cytoplasmic; it reads KTANEGGSLLYEQLGHKAYGLAGKLAASGSITMQN. Residues 159–177 traverse the membrane as a helical segment; the sequence is IGAMSSYLFIVKYELPLVI. At 178–188 the chain is on the extracellular side; sequence KALMNIEDTNG. Residues 189-209 form a helical membrane-spanning segment; that stretch reads LWYLNGDYLVLLVSLVLILPL. The Cytoplasmic segment spans residues 210–217; the sequence is SLLRNLGY. Residues 218 to 238 form a helical membrane-spanning segment; the sequence is LGYTSGLSLLCMIFFLIVVIC. The Extracellular portion of the chain corresponds to 239 to 289; sequence KKFQIPCPVEAALVANETVNGTFTQAALALAFNSTADDACRPRYFIFNSQT. A disulfide bridge connects residues Cys245 and Cys278. 2 N-linked (GlcNAc...) asparagine glycosylation sites follow: Asn254 and Asn258. Residues 290–310 form a helical membrane-spanning segment; the sequence is VYAVPILTFSFVCHPAVLPIY. At 311-326 the chain is on the cytoplasmic side; the sequence is EELKSRSRRRMMNVSK. A helical transmembrane segment spans residues 327–347; sequence ISFFAMFLMYLLAALFGYLTF. At 348–368 the chain is on the extracellular side; sequence YGHVESELLHTYSEIVGTDIL. Residues 369-389 traverse the membrane as a helical segment; it reads LLVVRLAVLVAVTLTVPVVIF. Na(+) is bound at residue Thr383. Over 390 to 410 the chain is Cytoplasmic; the sequence is PIRSSVTHLLCPTKEFSWLRH. A helical transmembrane segment spans residues 411 to 431; the sequence is SIITVTILSFTNLLVIFVPTI. Over 432–433 the chain is Extracellular; sequence RD. A helical transmembrane segment spans residues 434-454; it reads IFGFIGASAAAMLIFILPSAF. Over 455–469 the chain is Cytoplasmic; sequence YIKLVKKEPMRSVQK. Residues 470–492 form a helical membrane-spanning segment; sequence IGALCFLLSGIVVMIGSMGLIVL. Over 493-504 the chain is Extracellular; that stretch reads DWVHDASAAGGH.

Belongs to the amino acid/polyamine transporter 2 family. Post-translationally, polyubiquitination by NEDD4L regulates the degradation and the activity of SLC38A2. In terms of tissue distribution, expressed in cerebral and cerebellar astrocytes and neurons.

It localises to the cell membrane. The catalysed reaction is L-alanine(in) + Na(+)(in) = L-alanine(out) + Na(+)(out). It catalyses the reaction glycine(in) + Na(+)(in) = glycine(out) + Na(+)(out). It carries out the reaction L-serine(in) + Na(+)(in) = L-serine(out) + Na(+)(out). The enzyme catalyses L-proline(in) + Na(+)(in) = L-proline(out) + Na(+)(out). The catalysed reaction is L-methionine(in) + Na(+)(in) = L-methionine(out) + Na(+)(out). It catalyses the reaction L-histidine(in) + Na(+)(in) = L-histidine(out) + Na(+)(out). It carries out the reaction L-asparagine(in) + Na(+)(in) = L-asparagine(out) + Na(+)(out). The enzyme catalyses L-glutamine(in) + Na(+)(in) = L-glutamine(out) + Na(+)(out). The catalysed reaction is L-threonine(in) + Na(+)(in) = L-threonine(out) + Na(+)(out). It catalyses the reaction L-leucine(in) + Na(+)(in) = L-leucine(out) + Na(+)(out). It carries out the reaction L-phenylalanine(in) + Na(+)(in) = L-phenylalanine(out) + Na(+)(out). With respect to regulation, inhibited by N-methyl-D-glucamine. Inhibited by choline. Allosteric regulation of sodium ions binding by pH. Functionally, symporter that cotransports neutral amino acids and sodium ions from the extracellular to the intracellular side of the cell membrane. The transport is pH-sensitive, Li(+)-intolerant, electrogenic, driven by the Na(+) electrochemical gradient and cotransports of neutral amino acids and sodium ions with a stoichiometry of 1:1. May function in the transport of amino acids at the blood-brain barrier. May function in the transport of amino acids in the supply of maternal nutrients to the fetus through the placenta. Maintains a key metabolic glutamine/glutamate balance underpinning retrograde signaling by dendritic release of the neurotransmitter glutamate. Transports L-proline in differentiating osteoblasts for the efficient synthesis of proline-enriched proteins and provides proline essential for osteoblast differentiation and bone formation during bone development. The chain is Sodium-coupled neutral amino acid symporter 2 from Mus musculus (Mouse).